The following is a 453-amino-acid chain: Kynurenine 3-monooxygenase (453 aa).

Belongs to the aromatic-ring hydroxylase family. KMO subfamily. It depends on FAD as a cofactor.

The catalysed reaction is L-kynurenine + NADPH + O2 + H(+) = 3-hydroxy-L-kynurenine + NADP(+) + H2O. The protein operates within cofactor biosynthesis; NAD(+) biosynthesis; quinolinate from L-kynurenine: step 1/3. Catalyzes the hydroxylation of L-kynurenine (L-Kyn) to form 3-hydroxy-L-kynurenine (L-3OHKyn). Required for synthesis of quinolinic acid. The sequence is that of Kynurenine 3-monooxygenase from Salinispora tropica (strain ATCC BAA-916 / DSM 44818 / JCM 13857 / NBRC 105044 / CNB-440).